The sequence spans 228 residues: Ribosomal RNA small subunit methyltransferase G (228 aa).

S-adenosyl-L-methionine contacts are provided by residues Gly-70, 121–122, and Arg-138; that span reads AE.

This sequence belongs to the methyltransferase superfamily. RNA methyltransferase RsmG family.

Its subcellular location is the cytoplasm. In terms of biological role, specifically methylates the N7 position of a guanine in 16S rRNA. This chain is Ribosomal RNA small subunit methyltransferase G, found in Thermotoga petrophila (strain ATCC BAA-488 / DSM 13995 / JCM 10881 / RKU-1).